We begin with the raw amino-acid sequence, 395 residues long: Acetylornithine aminotransferase (395 aa).

Pyridoxal 5'-phosphate-binding positions include 117–118 (GA) and phenylalanine 144. A N(2)-acetyl-L-ornithine-binding site is contributed by arginine 147. 230–233 (DEVQ) contacts pyridoxal 5'-phosphate. At lysine 259 the chain carries N6-(pyridoxal phosphate)lysine. Position 285 (serine 285) interacts with N(2)-acetyl-L-ornithine. Threonine 286 contacts pyridoxal 5'-phosphate.

The protein belongs to the class-III pyridoxal-phosphate-dependent aminotransferase family. ArgD subfamily. In terms of assembly, homodimer. It depends on pyridoxal 5'-phosphate as a cofactor.

Its subcellular location is the cytoplasm. The enzyme catalyses N(2)-acetyl-L-ornithine + 2-oxoglutarate = N-acetyl-L-glutamate 5-semialdehyde + L-glutamate. It functions in the pathway amino-acid biosynthesis; L-arginine biosynthesis; N(2)-acetyl-L-ornithine from L-glutamate: step 4/4. This Methanosarcina mazei (strain ATCC BAA-159 / DSM 3647 / Goe1 / Go1 / JCM 11833 / OCM 88) (Methanosarcina frisia) protein is Acetylornithine aminotransferase.